A 1647-amino-acid chain; its full sequence is Transcription elongation factor SPT6 homolog (1647 aa).

The interval 1 to 209 is disordered; sequence MARNAISDDE…SKKKKYRQGS (209 aa). Acidic residues predominate over residues 7-20; sequence SDDEEDHELEDDDG. Basic and acidic residues predominate over residues 21 to 30; it reads EPVHGDPAEH. Residues 31-67 are compositionally biased toward acidic residues; that stretch reads DENDDEEDDDDVGNEYENDGFIVNDEDEEEEEEEDEE. A compositionally biased stretch (basic residues) spans 103–114; it reads KFKKRQYKRLKK. The segment covering 132-151 has biased composition (basic and acidic residues); the sequence is DSRGGTRRSAEDKIKDRLFD. A compositionally biased stretch (acidic residues) spans 152 to 191; it reads DVDVDDPPDDVGDEEDLVVEEDVVGSEDEMADFIVDEDDE. Residues 1103–1174 form the S1 motif domain; the sequence is GRIVQASVRR…QRYQVFLICK (72 aa). Residues 1429-1647 are disordered; it reads PMRSPADHGS…RKSDGGGGGW (219 aa). A run of 2 repeats spans residues 1443 to 1444 and 1452 to 1453. Residues 1443 to 1647 are 12 X 2 AA repeats of [WG]-[GW] repeats; the sequence is GWGSSQSEGG…RKSDGGGGGW (205 aa). A compositionally biased stretch (gly residues) spans 1462-1471; that stretch reads SGRGGEYRNG. The span at 1496–1507 shows a compositional bias: basic and acidic residues; the sequence is RRDDMNSDRQDG. 6 tandem repeats follow at residues 1511–1512, 1522–1523, 1530–1531, 1547–1548, 1563–1564, and 1574–1575. Gly residues-rich tracts occupy residues 1519–1532, 1539–1552, 1561–1579, and 1588–1600; these read ADGGWGNSGGGGWG, KTGGGSTGGWGSES, GSWGSGSGGGGSGGWGNDS, and GGFGSGSGGGGSD. Tandem repeats lie at residues 1601–1602, 1615–1616, 1630–1631, and 1646–1647.

It belongs to the SPT6 family. In terms of assembly, interacts (via N-terminus) with IWS1. Expressed in shoot apical meristem, leaf primordia, vasculature of young leaves, inflorescence meristem, floral meristem, young floral organs, developing ovules and anthers.

It localises to the nucleus. Its function is as follows. Transcription elongation factor that enhances the transcription elongation by RNA polymerase II (RNAPII). Plays an important role in regulating embryo apical and basal patterning during early embryogenesis, partly through negative regulation of the transcription factors PHABULOSA and PHAVOLUTA. This chain is Transcription elongation factor SPT6 homolog, found in Arabidopsis thaliana (Mouse-ear cress).